Here is a 233-residue protein sequence, read N- to C-terminus: MAKLSKRMRVIREKVDGTKEYSINEAIALLKELATAKFVESVDVAVNLGIDARKSDQNVRGATVLPHGTGRDVRVAVFTQGANAEAAKAAGAELVGMDDLADLVKKGEMNFDVVIASPDAMRVVGQLGQILGPRGLMPNPKVGTVTPNVAEAVKNAKAGQVRYRNDKNGIIHTTLGKVSFDEVQLKENLESLLVALKKAKPSSAKGIFIKKVSISTTMGAGVAVDQASLEAQG.

This sequence belongs to the universal ribosomal protein uL1 family. Part of the 50S ribosomal subunit.

Functionally, binds directly to 23S rRNA. The L1 stalk is quite mobile in the ribosome, and is involved in E site tRNA release. Its function is as follows. Protein L1 is also a translational repressor protein, it controls the translation of the L11 operon by binding to its mRNA. The chain is Large ribosomal subunit protein uL1 from Aeromonas salmonicida (strain A449).